The chain runs to 71 residues: Prokaryotic ubiquitin-like protein Pup (71 aa).

The span at 1–18 shows a compositional bias: low complexity; sequence MATRDSGGQSQTGRSQQG. Residues 1 to 42 are disordered; that stretch reads MATRDSGGQSQTGRSQQGEEIEDVTTEASAEAAERHAEITED. Residues 27 to 65 are ARC ATPase binding; it reads EASAEAAERHAEITEDVDDLLDEIDSVLEENAEEFVRGY. Positions 29–60 form a coiled coil; that stretch reads SAEAAERHAEITEDVDDLLDEIDSVLEENAEE. E71 is covalently cross-linked (Isoglutamyl lysine isopeptide (Glu-Lys) (interchain with K-? in acceptor proteins)).

Belongs to the prokaryotic ubiquitin-like protein family. In terms of assembly, strongly interacts with the proteasome-associated ATPase ARC through a hydrophobic interface; the interacting region of Pup lies in its C-terminal half. There is one Pup binding site per ARC hexamer ring.

Its pathway is protein degradation; proteasomal Pup-dependent pathway. In terms of biological role, protein modifier that is covalently attached to lysine residues of substrate proteins, thereby targeting them for proteasomal degradation. The tagging system is termed pupylation. The chain is Prokaryotic ubiquitin-like protein Pup from Salinispora tropica (strain ATCC BAA-916 / DSM 44818 / JCM 13857 / NBRC 105044 / CNB-440).